We begin with the raw amino-acid sequence, 263 residues long: Trem-like transcript 4 protein (263 aa).

Positions 1–28 are cleaved as a signal peptide; sequence MAWRYSQLLLVPVQLVFLASVCCPGVWG. Residues 29–132 enclose the Ig-like V-type domain; the sequence is STVSEELHRM…LREVTVLRNI (104 aa). The Extracellular segment spans residues 29 to 200; that stretch reads STVSEELHRM…GWTSPGLLVS (172 aa). Residues Cys47 and Cys116 are joined by a disulfide bond. An N-linked (GlcNAc...) asparagine glycan is attached at Asn100. The disordered stretch occupies residues 168-191; that stretch reads SPEETTDSSINGTGHRNQSSSSPG. Residues 201 to 221 form a helical membrane-spanning segment; that stretch reads VQYGLLLLKALMLSVFCVLLC. The Cytoplasmic portion of the chain corresponds to 222-263; the sequence is WRSGQGREYMAETMELSKLPHISKSLDTVSHISGYEKKANWY.

As to quaternary structure, interacts with TYROBP/DAP12. In terms of tissue distribution, predominantly expressed in spleen, with highest levels on selected populations of macrophages, including red pulp macrophages, and on subsets of dendritic cells (DC), mostly on CD8alpha(+) DC (at protein level). Also expressed on blood and spleen Ly6C(low) monocytes (at protein level). Not expressed on lymphocytes or granulocytes (at protein level).

It localises to the cell membrane. Functionally, positively regulates Toll-like receptor signaling via TLR7, TLR9 and TLR13 in neutrophils and splenic macrophages. Regulates TLR7 signaling by controlling ligand-induced recruitment of TLR7 from the endoplasmic reticulum to endosomes and lysosomes. Positively regulates Toll-like receptor TLR9-induced production of inflammatory cytokines but is dispensable for IFNB1 production. Involved in the anti-viral response to several viruses including influenza virus, vesicular stomatitis virus and cytomegalovirus. Binds to late apoptotic, and necrotic cells, but not living or early apoptotic cells, but is not essential for uptake of dying cells by dendritic cells (DCs). Does not bind nucleic acids. May participate in antigen presentation. This chain is Trem-like transcript 4 protein (Treml4), found in Mus musculus (Mouse).